The following is a 214-amino-acid chain: Guanylate kinase (214 aa).

The region spanning 6–192 is the Guanylate kinase-like domain; sequence GTLYIISAPS…ALEDLKAIFR (187 aa). 13 to 20 lines the ATP pocket; the sequence is APSGAGKT.

Belongs to the guanylate kinase family.

It localises to the cytoplasm. It carries out the reaction GMP + ATP = GDP + ADP. Its function is as follows. Essential for recycling GMP and indirectly, cGMP. The protein is Guanylate kinase of Pseudomonas savastanoi pv. phaseolicola (strain 1448A / Race 6) (Pseudomonas syringae pv. phaseolicola (strain 1448A / Race 6)).